We begin with the raw amino-acid sequence, 442 residues long: Chromosomal replication initiator protein DnaA (442 aa).

The domain I, interacts with DnaA modulators stretch occupies residues 1–75; it reads MDAWPRCLER…GNGEVALAVG (75 aa). Residues 75-104 form a domain II region; the sequence is GSRPRAPEPAPAAAAVPSAPQAAPMVPFAG. Residues 105 to 322 are domain III, AAA+ region; sequence NLDSHYTFAN…GALNTLVARA (218 aa). Residues glycine 150, glycine 152, lysine 153, and threonine 154 each coordinate ATP. The interval 323–442 is domain IV, binds dsDNA; sequence NFTGRSITVE…WEKLIRKLSE (120 aa).

Belongs to the DnaA family. Oligomerizes as a right-handed, spiral filament on DNA at oriC.

Its subcellular location is the cytoplasm. In terms of biological role, plays an essential role in the initiation and regulation of chromosomal replication. ATP-DnaA binds to the origin of replication (oriC) to initiate formation of the DNA replication initiation complex once per cell cycle. Binds the DnaA box (a 9 base pair repeat at the origin) and separates the double-stranded (ds)DNA. Forms a right-handed helical filament on oriC DNA; dsDNA binds to the exterior of the filament while single-stranded (ss)DNA is stabiized in the filament's interior. The ATP-DnaA-oriC complex binds and stabilizes one strand of the AT-rich DNA unwinding element (DUE), permitting loading of DNA polymerase. After initiation quickly degrades to an ADP-DnaA complex that is not apt for DNA replication. Binds acidic phospholipids. In Xanthomonas euvesicatoria pv. vesicatoria (strain 85-10) (Xanthomonas campestris pv. vesicatoria), this protein is Chromosomal replication initiator protein DnaA.